We begin with the raw amino-acid sequence, 921 residues long: Dual serine/threonine and tyrosine protein kinase (921 aa).

The region spanning Pro645–Leu899 is the Protein kinase domain. Residues Leu651 to Val659 and Lys674 contribute to the ATP site. The Proton acceptor role is filled by Asp770.

This sequence belongs to the protein kinase superfamily. Ser/Thr protein kinase family.

It localises to the cytoplasm. Its subcellular location is the cell membrane. The protein localises to the apical cell membrane. The protein resides in the basolateral cell membrane. It is found in the cell junction. It carries out the reaction L-seryl-[protein] + ATP = O-phospho-L-seryl-[protein] + ADP + H(+). The enzyme catalyses L-threonyl-[protein] + ATP = O-phospho-L-threonyl-[protein] + ADP + H(+). It catalyses the reaction L-tyrosyl-[protein] + ATP = O-phospho-L-tyrosyl-[protein] + ADP + H(+). May act as a positive regulator of ERK phosphorylation downstream of fibroblast growth factor-receptor activation. May induce both caspase-dependent apoptosis and caspase-independent cell death. May play a role in the embryonic development. This Takifugu rubripes (Japanese pufferfish) protein is Dual serine/threonine and tyrosine protein kinase (dstyk).